Consider the following 639-residue polypeptide: tRNA uridine 5-carboxymethylaminomethyl modification enzyme MnmG (639 aa).

13-18 (GGGHAG) lines the FAD pocket. 274 to 288 (GPRYCPSIEDKIHRF) contributes to the NAD(+) binding site.

It belongs to the MnmG family. Homodimer. Heterotetramer of two MnmE and two MnmG subunits. The cofactor is FAD.

It is found in the cytoplasm. Functionally, NAD-binding protein involved in the addition of a carboxymethylaminomethyl (cmnm) group at the wobble position (U34) of certain tRNAs, forming tRNA-cmnm(5)s(2)U34. The protein is tRNA uridine 5-carboxymethylaminomethyl modification enzyme MnmG of Polynucleobacter asymbioticus (strain DSM 18221 / CIP 109841 / QLW-P1DMWA-1) (Polynucleobacter necessarius subsp. asymbioticus).